The sequence spans 400 residues: MSDLQRTWAKAKFGASNDPFDEPQEEQGQDVLPELPEPVDDDSSSASSASSVSSTGTIIPSPNQKLFARPQGVARGRTLEQIPWTTYFEREVSLKSEQDPEVIYHAYLTSPVGKGPLFVMHHGAGSSGLSFAVVASQIRKRISTAGILALDCRGHGSTYAPEDKAFDMRLDTLSSDLYNVVQLTKTEMSWPEMPPIVLVGHSLGGAVVTDLAKSGKLGTSVLGYAVLDVVEGSAIDALQSMHTYLSTRPLGFATLQAGIEWHIRSRTIRNSISARTSVPALLVFNENDDPTRPWRWRTNLGATQPYWEDWFVGLSKKFLEARGGKMLLLAGTDRLDTELTIGQMQGKYALQVFPEAGHFIHEDLPEKTAVSLVDFFRRNDRTALVLPPKVSDLIKQGKRV.

Residues 1–72 (MSDLQRTWAK…NQKLFARPQG (72 aa)) are disordered. Acidic residues predominate over residues 19-28 (PFDEPQEEQG). Low complexity predominate over residues 44-54 (SSASSASSVSS). The segment covering 55–64 (TGTIIPSPNQ) has biased composition (polar residues). Active-site residues include S202, D228, and H358.

It belongs to the AB hydrolase superfamily.

It catalyses the reaction [phosphatase 2A protein]-C-terminal L-leucine methyl ester + H2O = [phosphatase 2A protein]-C-terminal L-leucine + methanol + H(+). Functionally, demethylates proteins that have been reversibly carboxymethylated. Demethylates the phosphatase PP2A catalytic subunit. This Gibberella zeae (strain ATCC MYA-4620 / CBS 123657 / FGSC 9075 / NRRL 31084 / PH-1) (Wheat head blight fungus) protein is Protein phosphatase methylesterase 1 (PPE1).